The primary structure comprises 284 residues: D-tagatose-1,6-bisphosphate aldolase subunit GatY (284 aa).

The active-site Proton donor is D82. Residues H83 and H180 each coordinate Zn(2+). Residue G181 participates in dihydroxyacetone phosphate binding. Residue H208 participates in Zn(2+) binding. Residues 209 to 211 and 230 to 233 each bind dihydroxyacetone phosphate; these read GAS and NVAT.

The protein belongs to the class II fructose-bisphosphate aldolase family. TagBP aldolase GatY subfamily. In terms of assembly, forms a complex with GatZ. Zn(2+) serves as cofactor.

The enzyme catalyses D-tagatofuranose 1,6-bisphosphate = D-glyceraldehyde 3-phosphate + dihydroxyacetone phosphate. It participates in carbohydrate metabolism; D-tagatose 6-phosphate degradation; D-glyceraldehyde 3-phosphate and glycerone phosphate from D-tagatose 6-phosphate: step 2/2. In terms of biological role, catalytic subunit of the tagatose-1,6-bisphosphate aldolase GatYZ, which catalyzes the reversible aldol condensation of dihydroxyacetone phosphate (DHAP or glycerone-phosphate) with glyceraldehyde 3-phosphate (G3P) to produce tagatose 1,6-bisphosphate (TBP). Requires GatZ subunit for full activity and stability. Is involved in the catabolism of galactitol. This chain is D-tagatose-1,6-bisphosphate aldolase subunit GatY, found in Escherichia coli O45:K1 (strain S88 / ExPEC).